The sequence spans 125 residues: U11-myrmicitoxin-Ta1a (125 aa).

The N-terminal stretch at 1–21 (MKTVIFILGFAFVAILIPTNG) is a signal peptide. The propeptide occupies 22-91 (ESMADADAMA…RAMAAAYAAA (70 aa)). A disulfide bond links cysteine 101 and cysteine 124.

It belongs to the formicidae venom precursor-01 superfamily. As to expression, expressed by the venom gland.

It is found in the secreted. Its subcellular location is the target cell membrane. Its function is as follows. Neurotoxin that causes irreversible rapid flaccid paralysis in blowflies and honeybees upon intrathoracic injection. Causes a quick and irreversible cytolytic effect (at 10 uM) indicating it possibly acts as a pore-forming peptide. Shows only weak effect on aphids (A.pisum) at high doses 24 hours post intrathoracic injection. In vitro, is not cytotoxic on the dipteran S2 Drosophila embryonic cell line. This Tetramorium africanum (Fierce ant) protein is U11-myrmicitoxin-Ta1a.